Consider the following 241-residue polypeptide: Triosephosphate isomerase (241 aa).

8–10 is a binding site for substrate; it reads NWK. H93 serves as the catalytic Electrophile. Residue E163 is the Proton acceptor of the active site. Residues G169, S205, and 226-227 contribute to the substrate site; that span reads GG.

Belongs to the triosephosphate isomerase family. As to quaternary structure, homodimer.

It is found in the cytoplasm. It catalyses the reaction D-glyceraldehyde 3-phosphate = dihydroxyacetone phosphate. The protein operates within carbohydrate biosynthesis; gluconeogenesis. Its pathway is carbohydrate degradation; glycolysis; D-glyceraldehyde 3-phosphate from glycerone phosphate: step 1/1. Its function is as follows. Involved in the gluconeogenesis. Catalyzes stereospecifically the conversion of dihydroxyacetone phosphate (DHAP) to D-glyceraldehyde-3-phosphate (G3P). This Bdellovibrio bacteriovorus (strain ATCC 15356 / DSM 50701 / NCIMB 9529 / HD100) protein is Triosephosphate isomerase.